A 395-amino-acid chain; its full sequence is Succinyl-diaminopimelate desuccinylase (395 aa).

His74 contacts Zn(2+). The active site involves Asp76. Position 107 (Asp107) interacts with Zn(2+). Glu141 acts as the Proton acceptor in catalysis. 3 residues coordinate Zn(2+): Glu142, Glu170, and His368.

This sequence belongs to the peptidase M20A family. DapE subfamily. In terms of assembly, homodimer. Zn(2+) serves as cofactor. Co(2+) is required as a cofactor.

It catalyses the reaction N-succinyl-(2S,6S)-2,6-diaminopimelate + H2O = (2S,6S)-2,6-diaminopimelate + succinate. It participates in amino-acid biosynthesis; L-lysine biosynthesis via DAP pathway; LL-2,6-diaminopimelate from (S)-tetrahydrodipicolinate (succinylase route): step 3/3. Functionally, catalyzes the hydrolysis of N-succinyl-L,L-diaminopimelic acid (SDAP), forming succinate and LL-2,6-diaminopimelate (DAP), an intermediate involved in the bacterial biosynthesis of lysine and meso-diaminopimelic acid, an essential component of bacterial cell walls. The protein is Succinyl-diaminopimelate desuccinylase of Chelativorans sp. (strain BNC1).